Consider the following 143-residue polypeptide: Peptide methionine sulfoxide reductase MsrB (143 aa).

In terms of domain architecture, MsrB spans 16–139 (DAELRRRLTP…NSAALNFESR (124 aa)). Zn(2+)-binding residues include Cys-55, Cys-58, Cys-104, and Cys-107. Catalysis depends on Cys-128, which acts as the Nucleophile.

Belongs to the MsrB Met sulfoxide reductase family. The cofactor is Zn(2+).

It carries out the reaction L-methionyl-[protein] + [thioredoxin]-disulfide + H2O = L-methionyl-(R)-S-oxide-[protein] + [thioredoxin]-dithiol. This chain is Peptide methionine sulfoxide reductase MsrB, found in Burkholderia ambifaria (strain ATCC BAA-244 / DSM 16087 / CCUG 44356 / LMG 19182 / AMMD) (Burkholderia cepacia (strain AMMD)).